The primary structure comprises 304 residues: Probable UDP-3-O-acylglucosamine N-acyltransferase 2, mitochondrial (304 aa).

Residues 1 to 47 (MAATLWRLYSKSICNSLQGIILNKPFIQKQLLLSSRTRSLSFSSDSQ) constitute a mitochondrion transit peptide. 159-161 (FGF) contacts UDP-N-acetyl-alpha-D-glucosamine. Hexadecanoate contacts are provided by Asp209 and Gln213. The active-site Proton acceptor is His216. UDP-N-acetyl-alpha-D-glucosamine-binding residues include Asn217, Ser235, and His253.

The protein belongs to the transferase hexapeptide repeat family. LpxD subfamily. As to quaternary structure, homotrimer.

The protein localises to the mitochondrion. The catalysed reaction is a UDP-3-O-[(3R)-3-hydroxyacyl]-alpha-D-glucosamine + a (3R)-hydroxyacyl-[ACP] = a UDP-2-N,3-O-bis[(3R)-3-hydroxyacyl]-alpha-D-glucosamine + holo-[ACP] + H(+). Its pathway is glycolipid biosynthesis; lipid IV(A) biosynthesis; lipid IV(A) from (3R)-3-hydroxytetradecanoyl-[acyl-carrier-protein] and UDP-N-acetyl-alpha-D-glucosamine: step 3/6. In terms of biological role, involved in the biosynthesis of lipid A, a phosphorylated glycolipid that in bacteria anchors the lipopolysaccharide to the outer membrane of the cell. Lipid A-like molecules in plants may serve as structural components of the outer membranes of mitochondria and/or chloroplasts, or may be involved in signal transduction or plant defense responses. In Arabidopsis thaliana (Mouse-ear cress), this protein is Probable UDP-3-O-acylglucosamine N-acyltransferase 2, mitochondrial (LPXD2).